Here is a 173-residue protein sequence, read N- to C-terminus: Alpha-crystallin A chain (173 aa).

M1 bears the N-acetylmethionine mark. The segment at M1–E63 is required for complex formation with BFSP1 and BFSP2. Q6 is subject to Deamidated glutamine; partial. Residue S45 is modified to Phosphoserine. Deamidated glutamine; partial occurs at positions 50 and 90. A sHSP domain is found at L52–S162. K99 is subject to N6-acetyllysine. H100 provides a ligand contact to Zn(2+). N101 is modified (deamidated asparagine; partial). Zn(2+) contacts are provided by E102 and H107. Residue S122 is modified to Phosphoserine. N123 is modified (deamidated asparagine; partial). The cysteines at positions 131 and 142 are disulfide-linked. Q147 is subject to Deamidated glutamine; partial. Positions G149 to S173 are disordered. The span at S153–P167 shows a compositional bias: basic and acidic residues. H154 is a binding site for Zn(2+). O-linked (GlcNAc) serine glycosylation occurs at S162.

Belongs to the small heat shock protein (HSP20) family. Heteromer composed of three CRYAA and one CRYAB subunits. Inter-subunit bridging via zinc ions enhances stability, which is crucial as there is no protein turn over in the lens. Can also form homodimers and homotetramers (dimers of dimers) which serve as the building blocks of homooligomers. Within homooligomers, the zinc-binding motif is created from residues of 3 different molecules. His-100 and Glu-102 from one molecule are ligands of the zinc ion, and His-107 and His-154 residues from additional molecules complete the site with tetrahedral coordination geometry. Part of a complex required for lens intermediate filament formation composed of BFSP1, BFSP2 and CRYAA. Post-translationally, undergoes age-dependent proteolytical cleavage at the C-terminus.

It localises to the cytoplasm. The protein localises to the nucleus. In terms of biological role, contributes to the transparency and refractive index of the lens. In its oxidized form (absence of intramolecular disulfide bond), acts as a chaperone, preventing aggregation of various proteins under a wide range of stress conditions. Required for the correct formation of lens intermediate filaments as part of a complex composed of BFSP1, BFSP2 and CRYAA. This Loxodonta africana (African elephant) protein is Alpha-crystallin A chain (CRYAA).